A 348-amino-acid chain; its full sequence is Protein RecA (348 aa).

68 to 75 lines the ATP pocket; the sequence is GPESSGKT.

This sequence belongs to the RecA family.

It localises to the cytoplasm. In terms of biological role, can catalyze the hydrolysis of ATP in the presence of single-stranded DNA, the ATP-dependent uptake of single-stranded DNA by duplex DNA, and the ATP-dependent hybridization of homologous single-stranded DNAs. It interacts with LexA causing its activation and leading to its autocatalytic cleavage. The sequence is that of Protein RecA from Rhodococcus opacus (strain B4).